We begin with the raw amino-acid sequence, 488 residues long: 6-phosphogluconate dehydrogenase, decarboxylating (488 aa).

NADP(+) contacts are provided by residues glycine 9 to glycine 14, asparagine 32 to threonine 34, valine 74 to alanine 76, and asparagine 102. Residues asparagine 102 and serine 128 to glycine 130 contribute to the substrate site. Lysine 183 functions as the Proton acceptor in the catalytic mechanism. Histidine 186–asparagine 187 contacts substrate. The active-site Proton donor is glutamate 190. Positions 191, 260, 287, 451, and 457 each coordinate substrate.

The protein belongs to the 6-phosphogluconate dehydrogenase family. In terms of assembly, homodimer.

It catalyses the reaction 6-phospho-D-gluconate + NADP(+) = D-ribulose 5-phosphate + CO2 + NADPH. It functions in the pathway carbohydrate degradation; pentose phosphate pathway; D-ribulose 5-phosphate from D-glucose 6-phosphate (oxidative stage): step 3/3. Functionally, catalyzes the oxidative decarboxylation of 6-phosphogluconate to ribulose 5-phosphate and CO(2), with concomitant reduction of NADP to NADPH. The polypeptide is 6-phosphogluconate dehydrogenase, decarboxylating (gnd) (Treponema pallidum (strain Nichols)).